The following is a 528-amino-acid chain: Probable histone-arginine methyltransferase 1.4 (528 aa).

Met-1 carries the N-acetylmethionine modification. The SAM-dependent MTase PRMT-type domain maps to 144 to 459 (EAASAKMYFH…QSYTINLTLS (316 aa)). Residues Gln-161, Arg-170, Gly-194, Glu-216, and Glu-246 each coordinate S-adenosyl-L-methionine. Catalysis depends on residues Glu-260 and Glu-269. Residue Thr-274 participates in S-adenosyl-L-methionine binding.

The protein belongs to the class I-like SAM-binding methyltransferase superfamily. Protein arginine N-methyltransferase family.

The protein resides in the nucleus. It localises to the cytoplasm. It catalyses the reaction L-arginyl-[protein] + 2 S-adenosyl-L-methionine = N(omega),N(omega)-dimethyl-L-arginyl-[protein] + 2 S-adenosyl-L-homocysteine + 2 H(+). In terms of biological role, methylates (mono- and asymmetric dimethylation) the guanidino nitrogens of arginyl residues in several proteins involved in DNA packaging, transcription regulation, and mRNA stability. Recruited to promoters upon gene activation, methylates histone H3 and activates transcription via chromatin remodeling. The chain is Probable histone-arginine methyltransferase 1.4 (PRMT14) from Arabidopsis thaliana (Mouse-ear cress).